The chain runs to 356 residues: Peptide chain release factor 1 (356 aa).

Gln233 is subject to N5-methylglutamine.

It belongs to the prokaryotic/mitochondrial release factor family. Methylated by PrmC. Methylation increases the termination efficiency of RF1.

Its subcellular location is the cytoplasm. Functionally, peptide chain release factor 1 directs the termination of translation in response to the peptide chain termination codons UAG and UAA. The protein is Peptide chain release factor 1 of Syntrophotalea carbinolica (strain DSM 2380 / NBRC 103641 / GraBd1) (Pelobacter carbinolicus).